The primary structure comprises 150 residues: Large ribosomal subunit protein uL11 (150 aa).

It belongs to the universal ribosomal protein uL11 family. Part of the ribosomal stalk of the 50S ribosomal subunit. Interacts with L10 and the large rRNA to form the base of the stalk. L10 forms an elongated spine to which L12 dimers bind in a sequential fashion forming a multimeric L10(L12)X complex. One or more lysine residues are methylated.

Its function is as follows. Forms part of the ribosomal stalk which helps the ribosome interact with GTP-bound translation factors. In Ureaplasma urealyticum serovar 10 (strain ATCC 33699 / Western), this protein is Large ribosomal subunit protein uL11.